Here is a 69-residue protein sequence, read N- to C-terminus: Large ribosomal subunit protein uL29 (69 aa).

It belongs to the universal ribosomal protein uL29 family.

This chain is Large ribosomal subunit protein uL29, found in Sulfolobus acidocaldarius (strain ATCC 33909 / DSM 639 / JCM 8929 / NBRC 15157 / NCIMB 11770).